We begin with the raw amino-acid sequence, 348 residues long: Dihydroorotase (348 aa).

Zn(2+)-binding residues include H14 and H16. Substrate contacts are provided by residues 16–18 (HLR) and N42. 3 residues coordinate Zn(2+): K100, H137, and H175. At K100 the chain carries N6-carboxylysine. H137 is a binding site for substrate. A substrate-binding site is contributed by L220. A Zn(2+)-binding site is contributed by D248. D248 is a catalytic residue. 2 residues coordinate substrate: H252 and A264.

Belongs to the metallo-dependent hydrolases superfamily. DHOase family. Class II DHOase subfamily. Homodimer. Zn(2+) serves as cofactor.

The catalysed reaction is (S)-dihydroorotate + H2O = N-carbamoyl-L-aspartate + H(+). Its pathway is pyrimidine metabolism; UMP biosynthesis via de novo pathway; (S)-dihydroorotate from bicarbonate: step 3/3. Catalyzes the reversible cyclization of carbamoyl aspartate to dihydroorotate. The sequence is that of Dihydroorotase from Azotobacter vinelandii (strain DJ / ATCC BAA-1303).